The following is a 564-amino-acid chain: Potassium-transporting ATPase potassium-binding subunit (564 aa).

The next 10 helical transmembrane spans lie at 4–24 (YDYL…PWLG), 67–87 (TLAL…VLLL), 135–155 (IGLT…LVAL), 179–199 (LYGL…QGVP), 258–278 (FEVA…GHYV), 286–306 (AIIA…LWSE), 382–402 (AGLY…GLMI), 420–440 (LLVA…AIAA), 487–507 (VMIG…VLAL), and 534–554 (LLLL…LALG).

It belongs to the KdpA family. As to quaternary structure, the system is composed of three essential subunits: KdpA, KdpB and KdpC.

Its subcellular location is the cell inner membrane. Functionally, part of the high-affinity ATP-driven potassium transport (or Kdp) system, which catalyzes the hydrolysis of ATP coupled with the electrogenic transport of potassium into the cytoplasm. This subunit binds the periplasmic potassium ions and delivers the ions to the membrane domain of KdpB through an intramembrane tunnel. This is Potassium-transporting ATPase potassium-binding subunit from Pseudomonas entomophila (strain L48).